A 372-amino-acid chain; its full sequence is Nickel transporter NicT (372 aa).

Transmembrane regions (helical) follow at residues 30-50, 55-75, 104-124, 152-172, 218-238, 245-265, 294-314, and 335-355; these read LMFA…TLLV, LSLG…TLGL, VGFF…VMLV, ISGA…VGIV, VGFL…LVLA, GLPW…MCLL, VTGL…LGLI, and TVGF…LLVW.

The protein belongs to the NiCoT transporter (TC 2.A.52) family.

It is found in the cell membrane. The catalysed reaction is Ni(2+)(in) = Ni(2+)(out). Its activity is regulated as follows. Export of the fluoroquinolone antibiotic norfloxacin is inhibited by the proton ionophore carbonyl cyanide m-chlorophenylhydrazone (CCCP). Nickel may influence the extrusion of antibiotics possibly by facilitating the proton motive force-dependent efflux process. Involved in nickel uptake. In addition, acts as a drug efflux pump and contributes to moderate tolerance towards different classes of antibiotics, including fluoroquinolones, aminoglycosides and the anti-TB drug isoniazid, with a preference for fluoroquinolones. The drug efflux function is probably dependent on proton motive force (pmf) or ion gradient, and might be facilitated by the presence of Ni(2+) ions. The polypeptide is Nickel transporter NicT (Mycobacterium tuberculosis (strain ATCC 25618 / H37Rv)).